Here is a 211-residue protein sequence, read N- to C-terminus: Large ribosomal subunit protein uL3 (211 aa).

The protein belongs to the universal ribosomal protein uL3 family. Part of the 50S ribosomal subunit. Forms a cluster with proteins L14 and L19.

One of the primary rRNA binding proteins, it binds directly near the 3'-end of the 23S rRNA, where it nucleates assembly of the 50S subunit. The protein is Large ribosomal subunit protein uL3 of Desulfatibacillum aliphaticivorans.